The chain runs to 510 residues: Probable sphingolipid transporter spinster homolog 3 (510 aa).

The chain crosses the membrane as a helical span at residues 44–64 (SSLSPVWLLVIFCIINLLNYM). Residues Asn-75 and Asn-98 are each glycosylated (N-linked (GlcNAc...) asparagine). A run of 11 helical transmembrane segments spans residues 106–126 (VLSS…ASLA), 136–156 (VWTI…IVLC), 158–178 (MFVG…IDDN), 185–205 (AAWL…GYVY), 219–239 (FWGE…MKPL), 298–318 (VFVV…AYSY), 336–356 (IFGA…GFIL), 369–387 (LLSG…AFTL), 392–414 (GFIA…VNYV), 430–450 (ISTV…VGIV), and 462–482 (LILT…KINL).

The protein belongs to the major facilitator superfamily. Spinster (TC 2.A.1.49) family.

Its subcellular location is the mitochondrion inner membrane. In terms of biological role, probable sphingolipid transporter. This is Probable sphingolipid transporter spinster homolog 3 from Arabidopsis thaliana (Mouse-ear cress).